The following is a 492-amino-acid chain: Cytoplasmic dynein 1 light intermediate chain 2 (492 aa).

An ATP-binding site is contributed by 61 to 68 (GEDGSGKT). Disordered regions lie at residues 187-206 (PEEG…SGSD), 371-423 (AKQP…KNNA), and 437-492 (LSKK…ENEA). Residue serine 194 is modified to Phosphoserine. Residues 371–381 (AKQPATPTRAS) show a composition bias toward polar residues. Serine 383 and serine 391 each carry phosphoserine. Position 397 is an omega-N-methylarginine (arginine 397). The segment covering 400-412 (PASVPSSSPGTSV) has biased composition (low complexity). At threonine 441 the chain carries Phosphothreonine. Residues serine 443 and serine 446 each carry the phosphoserine modification. Over residues 452–469 (VQSTAKKSGQKTVLSNVQ) the composition is skewed to polar residues. A compositionally biased stretch (basic and acidic residues) spans 471–480 (ELDRMTRKPD). Polar residues predominate over residues 482-492 (MVTNSSTENEA).

The protein belongs to the dynein light intermediate chain family. In terms of assembly, homodimer. The cytoplasmic dynein 1 complex consists of two catalytic heavy chains (HCs) and a number of non-catalytic subunits presented by intermediate chains (ICs), light intermediate chains (LICs) and light chains (LCs); the composition seems to vary in respect to the IC, LIC and LC composition. The heavy chain homodimer serves as a scaffold for the probable homodimeric assembly of the respective non-catalytic subunits. The ICs and LICs bind directly to the HC dimer and the LCs assemble on the IC dimer. Interacts with DYNC1H1; DYNC1LI1 and DYNC1LI2 bind mutually exclusive to DYNC1H.

The protein localises to the cytoplasm. It is found in the cytoskeleton. Its function is as follows. Acts as one of several non-catalytic accessory components of the cytoplasmic dynein 1 complex that are thought to be involved in linking dynein to cargos and to adapter proteins that regulate dynein function. Cytoplasmic dynein 1 acts as a motor for the intracellular retrograde motility of vesicles and organelles along microtubules. May play a role in binding dynein to membranous organelles or chromosomes. The protein is Cytoplasmic dynein 1 light intermediate chain 2 of Homo sapiens (Human).